Consider the following 284-residue polypeptide: 2-dehydro-3-deoxyphosphooctonate aldolase (284 aa).

It belongs to the KdsA family.

It localises to the cytoplasm. The catalysed reaction is D-arabinose 5-phosphate + phosphoenolpyruvate + H2O = 3-deoxy-alpha-D-manno-2-octulosonate-8-phosphate + phosphate. The protein operates within carbohydrate biosynthesis; 3-deoxy-D-manno-octulosonate biosynthesis; 3-deoxy-D-manno-octulosonate from D-ribulose 5-phosphate: step 2/3. It participates in bacterial outer membrane biogenesis; lipopolysaccharide biosynthesis. The protein is 2-dehydro-3-deoxyphosphooctonate aldolase of Salmonella paratyphi A (strain ATCC 9150 / SARB42).